A 752-amino-acid polypeptide reads, in one-letter code: Reticulon-1-B (752 aa).

Disordered stretches follow at residues 1 to 57 (MAAN…TSTD), 264 to 319 (EYPG…SEKQ), 334 to 424 (KAKE…SPSI), and 444 to 465 (ESCDGSSASEESPKRDPDSPMM). A compositionally biased stretch (polar residues) spans 264-273 (EYPGNQQGKS). Basic and acidic residues predominate over residues 334–361 (KAKEGTKRFSSETNDEKQSRSFHAEKQD). Over residues 363 to 383 (TVMSTEATSASHYTKASSAES) the composition is skewed to polar residues. The Reticulon domain occupies 566–752 (AIDLLYWRDV…AKIPGTKQKE (187 aa)). A run of 2 helical transmembrane segments spans residues 580-600 (IVFGSILLMLFSLTLFSVVSV) and 684-704 (VLMWLLTYVGALFNGLTLLIM).

As to expression, isoform A and isoform C are both expressed in the animal hemisphere (presumptive neural ectoderm) of blastula and gastrula stage embryos, and along the anterior neural border, in the panplacodal primordium, and in the dorsolateral side of archenteron roof of late neurula embryos. At the tailbud stage, expression of the isoforms begin to differ. Isoform A localizes to the cranial placodes including the trigeminal placode, lateral line placode, olfactory placode and otic vesicle. Isoform C localizes to the central nervous system, including the spinal cord, prosencephalon, mesencephalon and rhombencephalon, as well as the lateral line placode, otic vesicle and pronephros.

It localises to the endoplasmic reticulum membrane. It is found in the nucleus. Inhibits amyloid precursor protein processing, probably by blocking BACE1 activity. The chain is Reticulon-1-B (rtn1-b) from Xenopus laevis (African clawed frog).